The primary structure comprises 362 residues: Chorismate synthase (362 aa).

Arginine 46 serves as a coordination point for NADP(+). Residues 122 to 124, 238 to 239, glycine 278, 293 to 297, and arginine 319 contribute to the FMN site; these read RSS, NA, and KPTPS.

It belongs to the chorismate synthase family. As to quaternary structure, homotetramer. FMNH2 is required as a cofactor.

It carries out the reaction 5-O-(1-carboxyvinyl)-3-phosphoshikimate = chorismate + phosphate. Its pathway is metabolic intermediate biosynthesis; chorismate biosynthesis; chorismate from D-erythrose 4-phosphate and phosphoenolpyruvate: step 7/7. Catalyzes the anti-1,4-elimination of the C-3 phosphate and the C-6 proR hydrogen from 5-enolpyruvylshikimate-3-phosphate (EPSP) to yield chorismate, which is the branch point compound that serves as the starting substrate for the three terminal pathways of aromatic amino acid biosynthesis. This reaction introduces a second double bond into the aromatic ring system. The polypeptide is Chorismate synthase (Campylobacter jejuni (strain RM1221)).